The chain runs to 363 residues: UDP-N-acetylenolpyruvoylglucosamine reductase (363 aa).

An FAD-binding PCMH-type domain is found at 27–197 (LGGWATRVVT…LSVDFRLARS (171 aa)). Residue arginine 175 is part of the active site. Serine 252 functions as the Proton donor in the catalytic mechanism. Glutamate 355 is a catalytic residue.

Belongs to the MurB family. FAD is required as a cofactor.

It localises to the cytoplasm. The catalysed reaction is UDP-N-acetyl-alpha-D-muramate + NADP(+) = UDP-N-acetyl-3-O-(1-carboxyvinyl)-alpha-D-glucosamine + NADPH + H(+). It participates in cell wall biogenesis; peptidoglycan biosynthesis. Its function is as follows. Cell wall formation. The sequence is that of UDP-N-acetylenolpyruvoylglucosamine reductase from Salinispora arenicola (strain CNS-205).